The chain runs to 874 residues: Bifunctional uridylyltransferase/uridylyl-removing enzyme (874 aa).

Residues 1–332 (MPLQSPLTFS…NGGATENAEI (332 aa)) form a uridylyltransferase region. The tract at residues 333 to 692 (LDADFQRRGS…ISKKATRGGT (360 aa)) is uridylyl-removing. Residues 451-573 (VDEHSIRLLK…VRDEESLEYL (123 aa)) form the HD domain. ACT domains are found at residues 693–777 (EVFV…RTPN) and 800–874 (LMEF…AVTA).

It belongs to the GlnD family. Mg(2+) is required as a cofactor.

The catalysed reaction is [protein-PII]-L-tyrosine + UTP = [protein-PII]-uridylyl-L-tyrosine + diphosphate. It catalyses the reaction [protein-PII]-uridylyl-L-tyrosine + H2O = [protein-PII]-L-tyrosine + UMP + H(+). Its activity is regulated as follows. Uridylyltransferase (UTase) activity is inhibited by glutamine, while glutamine activates uridylyl-removing (UR) activity. Its function is as follows. Modifies, by uridylylation and deuridylylation, the PII regulatory proteins (GlnB and homologs), in response to the nitrogen status of the cell that GlnD senses through the glutamine level. Under low glutamine levels, catalyzes the conversion of the PII proteins and UTP to PII-UMP and PPi, while under higher glutamine levels, GlnD hydrolyzes PII-UMP to PII and UMP (deuridylylation). Thus, controls uridylylation state and activity of the PII proteins, and plays an important role in the regulation of nitrogen assimilation and metabolism. The sequence is that of Bifunctional uridylyltransferase/uridylyl-removing enzyme from Vibrio parahaemolyticus serotype O3:K6 (strain RIMD 2210633).